The primary structure comprises 254 residues: Probable electron transfer flavoprotein subunit beta (254 aa).

This sequence belongs to the ETF beta-subunit/FixA family. In terms of assembly, heterodimer of an alpha and a beta subunit. Requires FAD as cofactor. AMP is required as a cofactor.

It is found in the mitochondrion matrix. Its function is as follows. The electron transfer flavoprotein serves as a specific electron acceptor for several dehydrogenases, including five acyl-CoA dehydrogenases, glutaryl-CoA and sarcosine dehydrogenase. It transfers the electrons to the main mitochondrial respiratory chain via ETF-ubiquinone oxidoreductase (ETF dehydrogenase). The chain is Probable electron transfer flavoprotein subunit beta from Schizosaccharomyces pombe (strain 972 / ATCC 24843) (Fission yeast).